The following is a 187-amino-acid chain: Elongation factor P 2 (187 aa).

This sequence belongs to the elongation factor P family.

Its subcellular location is the cytoplasm. The protein operates within protein biosynthesis; polypeptide chain elongation. Involved in peptide bond synthesis. Stimulates efficient translation and peptide-bond synthesis on native or reconstituted 70S ribosomes in vitro. Probably functions indirectly by altering the affinity of the ribosome for aminoacyl-tRNA, thus increasing their reactivity as acceptors for peptidyl transferase. The polypeptide is Elongation factor P 2 (Geobacter sulfurreducens (strain ATCC 51573 / DSM 12127 / PCA)).